The sequence spans 435 residues: Xylose isomerase (435 aa).

Aspartate 306 and aspartate 308 together coordinate Mg(2+).

Belongs to the xylose isomerase family. As to quaternary structure, homotetramer. It depends on Mg(2+) as a cofactor.

The protein localises to the cytoplasm. It carries out the reaction alpha-D-xylose = alpha-D-xylulofuranose. In Allorhizobium ampelinum (strain ATCC BAA-846 / DSM 112012 / S4) (Agrobacterium vitis (strain S4)), this protein is Xylose isomerase.